The chain runs to 278 residues: Phosphatidylglycerol--prolipoprotein diacylglyceryl transferase (278 aa).

A run of 4 helical transmembrane segments spans residues 19-39 (WYGILMATGVLVATLMAINEG), 49-69 (FIDFLLWAVPIGFIGARIYYV), 86-106 (IWNGGIAIYGGLIAGLIVLLI), and 112-132 (MLPPFLMLDIIAPGVMAAQVI). R134 is an a 1,2-diacyl-sn-glycero-3-phospho-(1'-sn-glycerol) binding site. A run of 3 helical transmembrane segments spans residues 174–194 (QPTYLYESTLNLIGLILILSL), 204–224 (GEIFLSYVIWYSAVRFFVEGM), and 235–255 (IRVSQALSLILFFGAIILWIY).

This sequence belongs to the Lgt family.

It is found in the cell membrane. It carries out the reaction L-cysteinyl-[prolipoprotein] + a 1,2-diacyl-sn-glycero-3-phospho-(1'-sn-glycerol) = an S-1,2-diacyl-sn-glyceryl-L-cysteinyl-[prolipoprotein] + sn-glycerol 1-phosphate + H(+). It participates in protein modification; lipoprotein biosynthesis (diacylglyceryl transfer). Catalyzes the transfer of the diacylglyceryl group from phosphatidylglycerol to the sulfhydryl group of the N-terminal cysteine of a prolipoprotein, the first step in the formation of mature lipoproteins. This is Phosphatidylglycerol--prolipoprotein diacylglyceryl transferase from Lactobacillus johnsonii (strain CNCM I-12250 / La1 / NCC 533).